The sequence spans 160 residues: SsrA-binding protein (160 aa).

It belongs to the SmpB family.

The protein resides in the cytoplasm. Required for rescue of stalled ribosomes mediated by trans-translation. Binds to transfer-messenger RNA (tmRNA), required for stable association of tmRNA with ribosomes. tmRNA and SmpB together mimic tRNA shape, replacing the anticodon stem-loop with SmpB. tmRNA is encoded by the ssrA gene; the 2 termini fold to resemble tRNA(Ala) and it encodes a 'tag peptide', a short internal open reading frame. During trans-translation Ala-aminoacylated tmRNA acts like a tRNA, entering the A-site of stalled ribosomes, displacing the stalled mRNA. The ribosome then switches to translate the ORF on the tmRNA; the nascent peptide is terminated with the 'tag peptide' encoded by the tmRNA and targeted for degradation. The ribosome is freed to recommence translation, which seems to be the essential function of trans-translation. The protein is SsrA-binding protein of Escherichia coli O139:H28 (strain E24377A / ETEC).